The sequence spans 525 residues: M-phase inducer phosphatase 1 (525 aa).

A disordered region spans residues 1–42; that stretch reads MELGPEPPHRRRLLFTCSPTPAPQPTGKVQFGASRAGGLSPV. Positions 74–84 match the Phosphodegron motif; that stretch reads MGSSESTDSGF. Ser-76 carries the phosphoserine; by CHEK1 modification. Ser-79, Ser-82, and Ser-88 each carry phosphoserine; by NEK11. Phosphoserine; by CHEK1 and CHEK2 is present on Ser-124. Residues 141 to 143 carry the KEN box motif; that stretch reads KEN. A Phosphoserine; by CHEK1 modification is found at Ser-178. The interval 260–318 is disordered; that stretch reads FDSPSPCSSTSSCSTRAVKRADRSHEESPRGTKRRKSSEASPVKADVPEPTQLPHQSLS. Low complexity predominate over residues 262 to 274; the sequence is SPSPCSSTSSCST. Residues 278–289 show a composition bias toward basic and acidic residues; that stretch reads KRADRSHEESPR. A phosphoserine; by CHEK1 and CHEK2 mark is found at Ser-283 and Ser-296. The Rhodanese domain occupies 377 to 483; that stretch reads LIKEFVIIDC…FFLKCQSHCE (107 aa). Residue Cys-432 is part of the active site. Phosphothreonine; by CHEK1 is present on Thr-508. Phosphoserine; by PLK3 is present on residues Ser-514 and Ser-520.

The protein belongs to the MPI phosphatase family. As to quaternary structure, interacts with CCNB1/cyclin B1. Interacts with YWHAE/14-3-3 epsilon when phosphorylated. Interacts with CUL1 specifically when CUL1 is neddylated and active. Interacts with BTRC/BTRCP1 and FBXW11/BTRCP2. Interactions with CUL1, BTRC and FBXW11 are enhanced upon DNA damage. Interacts with CHEK2; mediates CDC25A phosphorylation and degradation in response to infrared-induced DNA damages. Interacts with HSP90AB1; prevents heat shock-mediated CDC25A degradation and contributes to cell cycle progression. Post-translationally, phosphorylated by CHEK1 on Ser-76, Ser-124, Ser-178, Ser-283, Ser-296 and Thr-508 during checkpoint mediated cell cycle arrest. Also phosphorylated by CHEK2 on Ser-124, Ser-283, and Ser-296 during checkpoint mediated cell cycle arrest. Phosphorylation on Ser-178 and Thr-508 creates binding sites for YWHAE/14-3-3 epsilon which inhibits CDC25A. Phosphorylation on Ser-76, Ser-124, Ser-178, Ser-283 and Ser-296 may also promote ubiquitin-dependent proteolysis of CDC25A by the SCF complex. Phosphorylation of CDC25A at Ser-76 by CHEK1 primes it for subsequent phosphorylation at Ser-79, Ser-82 and Ser-88 by NEK11. Phosphorylation by NEK11 is required for BTRC-mediated polyubiquitination and degradation. Phosphorylation by PIM1 leads to an increase in phosphatase activity. Phosphorylated by PLK3 following DNA damage, leading to promote its ubiquitination and degradation. Ubiquitinated by the anaphase promoting complex/cyclosome (APC/C) ubiquitin ligase complex that contains FZR1/CDH1 during G1 phase leading to its degradation by the proteasome. Ubiquitinated by a SCF complex containing BTRC and FBXW11 during S phase leading to its degradation by the proteasome. Deubiquitination by USP17L2/DUB3 leads to its stabilization.

The catalysed reaction is O-phospho-L-tyrosyl-[protein] + H2O = L-tyrosyl-[protein] + phosphate. Stimulated by B-type cyclins. Stimulated by PIM1-mediated phosphorylation. Tyrosine protein phosphatase which functions as a dosage-dependent inducer of mitotic progression. Directly dephosphorylates CDK1 and stimulates its kinase activity. Also dephosphorylates CDK2 in complex with cyclin-E, in vitro. This Rattus norvegicus (Rat) protein is M-phase inducer phosphatase 1 (Cdc25a).